The chain runs to 61 residues: MPNILSLTCICFNSVLCPTSFFFAKLPEAYAIFNPIVDVMPVIPVLFFLLAFVWQAAVSFR.

Residues 1–24 (MPNILSLTCICFNSVLCPTSFFFA) constitute a propeptide that is removed on maturation. The helical transmembrane segment at 32–52 (IFNPIVDVMPVIPVLFFLLAF) threads the bilayer.

The protein belongs to the PsbK family. PSII is composed of 1 copy each of membrane proteins PsbA, PsbB, PsbC, PsbD, PsbE, PsbF, PsbH, PsbI, PsbJ, PsbK, PsbL, PsbM, PsbT, PsbX, PsbY, PsbZ, Psb30/Ycf12, at least 3 peripheral proteins of the oxygen-evolving complex and a large number of cofactors. It forms dimeric complexes.

It is found in the plastid. Its subcellular location is the chloroplast thylakoid membrane. Functionally, one of the components of the core complex of photosystem II (PSII). PSII is a light-driven water:plastoquinone oxidoreductase that uses light energy to abstract electrons from H(2)O, generating O(2) and a proton gradient subsequently used for ATP formation. It consists of a core antenna complex that captures photons, and an electron transfer chain that converts photonic excitation into a charge separation. The sequence is that of Photosystem II reaction center protein K from Sorghum bicolor (Sorghum).